The primary structure comprises 289 residues: Acetylglutamate kinase (289 aa).

Residues 65-66, Arg-87, and Asn-187 each bind substrate; that span reads GG.

This sequence belongs to the acetylglutamate kinase family. ArgB subfamily.

Its subcellular location is the cytoplasm. The catalysed reaction is N-acetyl-L-glutamate + ATP = N-acetyl-L-glutamyl 5-phosphate + ADP. The protein operates within amino-acid biosynthesis; L-arginine biosynthesis; N(2)-acetyl-L-ornithine from L-glutamate: step 2/4. Catalyzes the ATP-dependent phosphorylation of N-acetyl-L-glutamate. This is Acetylglutamate kinase from Chromobacterium violaceum (strain ATCC 12472 / DSM 30191 / JCM 1249 / CCUG 213 / NBRC 12614 / NCIMB 9131 / NCTC 9757 / MK).